The following is a 261-amino-acid chain: uncharacterized protein (261 aa).

The protein belongs to the BtpA family.

This is an uncharacterized protein from Methanocaldococcus jannaschii (strain ATCC 43067 / DSM 2661 / JAL-1 / JCM 10045 / NBRC 100440) (Methanococcus jannaschii).